A 633-amino-acid chain; its full sequence is Telomere-binding protein 1 (633 aa).

The segment at 253–272 (HAADRDDDENSSGCVHPSTS) is disordered. Polar residues predominate over residues 263-272 (SSGCVHPSTS). Residues 351-430 (VKLTIKSFNI…LNDIGFTLEC (80 aa)) enclose the Ubiquitin-like domain. The tract at residues 506–615 (PFADPNSLAL…RVLAAQAYWS (110 aa)) is sufficient for telomeric DNA binding. The 60-residue stretch at 529–588 (GQRRIRRPFTVAEVELLVEAVEHLGTGRWRDVKFRAFENVHHRTYVDLKDKWKTLVHTAS) folds into the HTH myb-type domain. Residues 534–584 (RRPFTVAEVELLVEAVEHLGTGRWRDVKFRAFENVHHRTYVDLKDKWKTLV) form the SANT domain. A DNA-binding region (H-T-H motif) is located at residues 557-584 (WRDVKFRAFENVHHRTYVDLKDKWKTLV).

In terms of assembly, homodimer. As to expression, ubiquitous.

Its subcellular location is the chromosome. It localises to the telomere. Functionally, binds the telomeric double-stranded 5'TTTAGGG-3' repeat and regulates telomere length and structure. This chain is Telomere-binding protein 1 (TBP1), found in Oryza sativa subsp. japonica (Rice).